The chain runs to 582 residues: Trans-activating transcriptional regulatory protein (582 aa).

Positions 101–131 (QPVVEQPSPSSAYHAESFEHSAGVNQPSATG) are disordered.

This sequence belongs to the nucleopolyhedrovirus IE-1 protein family. Homodimer. Interacts with helicase and LEF-3. Post-translationally, phosphorylated.

The protein resides in the host nucleus. Its function is as follows. Regulatory transcriptional protein, which trans-activates gene expression from early baculovirus promoters. Can also trans-activate its own promoter, suggesting an autoregulation during infection of host cells. Also promotes viral DNA genome replication via the N-terminal region. The polypeptide is Trans-activating transcriptional regulatory protein (IE1) (Autographa californica nuclear polyhedrosis virus (AcMNPV)).